The sequence spans 301 residues: tRNA dimethylallyltransferase (301 aa).

5–12 (GPTASGKS) is an ATP binding site. 7-12 (TASGKS) serves as a coordination point for substrate. Residues 30–33 (DSMQ) form an interaction with substrate tRNA region.

It belongs to the IPP transferase family. As to quaternary structure, monomer. Requires Mg(2+) as cofactor.

The catalysed reaction is adenosine(37) in tRNA + dimethylallyl diphosphate = N(6)-dimethylallyladenosine(37) in tRNA + diphosphate. In terms of biological role, catalyzes the transfer of a dimethylallyl group onto the adenine at position 37 in tRNAs that read codons beginning with uridine, leading to the formation of N6-(dimethylallyl)adenosine (i(6)A). The sequence is that of tRNA dimethylallyltransferase from Rhodopseudomonas palustris (strain TIE-1).